The primary structure comprises 133 residues: Nickel-responsive regulator (133 aa).

The Ni(2+) site is built by His76, His87, His89, and Cys95.

Belongs to the transcriptional regulatory CopG/NikR family. Homotetramer. It depends on Ni(2+) as a cofactor.

In terms of biological role, transcriptional repressor of the nikABCDE operon. Is active in the presence of excessive concentrations of intracellular nickel. This chain is Nickel-responsive regulator, found in Salmonella paratyphi A (strain ATCC 9150 / SARB42).